Here is a 792-residue protein sequence, read N- to C-terminus: Probable exo-1,4-beta-xylosidase xlnD (792 aa).

The first 20 residues, M1–A20, serve as a signal peptide directing secretion. N-linked (GlcNAc...) asparagine glycans are attached at residues N23, N87, N142, and N246. The active site involves D310. 10 N-linked (GlcNAc...) asparagine glycosylation sites follow: N326, N385, N391, N404, N438, N475, N479, N516, N677, and N699.

It belongs to the glycosyl hydrolase 3 family.

It is found in the secreted. It catalyses the reaction Hydrolysis of (1-&gt;4)-beta-D-xylans, to remove successive D-xylose residues from the non-reducing termini.. It functions in the pathway glycan degradation; xylan degradation. Functionally, xylan 1,4-beta-xylosidase involved in the hydrolysis of xylan, a major structural heterogeneous polysaccharide found in plant biomass representing the second most abundant polysaccharide in the biosphere, after cellulose. The sequence is that of Probable exo-1,4-beta-xylosidase xlnD (xlnD) from Aspergillus clavatus (strain ATCC 1007 / CBS 513.65 / DSM 816 / NCTC 3887 / NRRL 1 / QM 1276 / 107).